Reading from the N-terminus, the 862-residue chain is DNA topoisomerase 3-beta-1 (862 aa).

Residues 3-153 (TVLMVAEKPS…EKTVFRARFS (151 aa)) form the Toprim domain. In terms of domain architecture, Topo IA-type catalytic spans 171-593 (DHNEALSVDA…HTLDVFKRKF (423 aa)). Residue Tyr-336 is the O-(5'-phospho-DNA)-tyrosine intermediate of the active site. The segment covering 821–851 (PMHRGGPGRRQGRGRGRARRPPGKPNPRRPK) has biased composition (basic residues). Residues 821-854 (PMHRGGPGRRQGRGRGRARRPPGKPNPRRPKDKM) form a disordered region.

This sequence belongs to the type IA topoisomerase family. In terms of tissue distribution, isoform 1 is found in testis, heart and skeletal muscle. A 4 kb transcript which probably represents isoform 2 is found in thymus, kidney and pancreas.

The catalysed reaction is ATP-independent breakage of single-stranded DNA, followed by passage and rejoining.. Functionally, releases the supercoiling and torsional tension of DNA introduced during the DNA replication and transcription by transiently cleaving and rejoining one strand of the DNA duplex. Introduces a single-strand break via transesterification at a target site in duplex DNA. The scissile phosphodiester is attacked by the catalytic tyrosine of the enzyme, resulting in the formation of a DNA-(5'-phosphotyrosyl)-enzyme intermediate and the expulsion of a 3'-OH DNA strand. The free DNA strand than undergoes passage around the unbroken strand thus removing DNA supercoils. Finally, in the religation step, the DNA 3'-OH attacks the covalent intermediate to expel the active-site tyrosine and restore the DNA phosphodiester backbone. Possesses negatively supercoiled DNA relaxing activity. The polypeptide is DNA topoisomerase 3-beta-1 (TOP3B) (Homo sapiens (Human)).